The primary structure comprises 316 residues: Transaldolase (316 aa).

The Schiff-base intermediate with substrate role is filled by Lys132.

It belongs to the transaldolase family. Type 1 subfamily.

The protein resides in the cytoplasm. It catalyses the reaction D-sedoheptulose 7-phosphate + D-glyceraldehyde 3-phosphate = D-erythrose 4-phosphate + beta-D-fructose 6-phosphate. It participates in carbohydrate degradation; pentose phosphate pathway; D-glyceraldehyde 3-phosphate and beta-D-fructose 6-phosphate from D-ribose 5-phosphate and D-xylulose 5-phosphate (non-oxidative stage): step 2/3. Transaldolase is important for the balance of metabolites in the pentose-phosphate pathway. In Methylomonas aminofaciens, this protein is Transaldolase.